Here is a 1782-residue protein sequence, read N- to C-terminus: Vitellogenin (1782 aa).

The N-terminal stretch at 1 to 15 (MKLFVLAAIIAAVSS) is a signal peptide. One can recognise a Vitellogenin domain in the interval 34–812 (WQVGKQYRYE…SEDSLLPKDF (779 aa)). 2 disordered regions span residues 333–367 (HYES…SRRS) and 379–406 (VLKK…INDD). The segment covering 344 to 358 (ESHEFNFPEQHEHPH) has biased composition (basic and acidic residues). Residues 386–400 (ESSSGSSSSSADSSS) are compositionally biased toward low complexity. 5 N-linked (GlcNAc...) asparagine glycosylation sites follow: Asn569, Asn587, Asn1357, Asn1463, and Asn1596. The 190-residue stretch at 1449–1638 (PYCSIDGTRI…AYSLNEENSD (190 aa)) folds into the VWFD domain. A disulfide bridge connects residues Cys1451 and Cys1602.

As to quaternary structure, heterotetramer of two heavy and two light chains. Post-translationally, glycosylated and phosphorylated. As to expression, detected in oocytes (at protein level). Produced by the fat body, where it is cleaved before being secreted into hemolymph. Sequestered then by a single class of receptor mediated endocytosis in the ovary.

It is found in the secreted. It localises to the cytoplasm. Its subcellular location is the cytoplasmic granule. Functionally, precursor of the egg-yolk proteins that are sources of nutrients during embryonic development. This Bombyx mori (Silk moth) protein is Vitellogenin (VG).